We begin with the raw amino-acid sequence, 351 residues long: Silk gland factor 3 (351 aa).

2 disordered regions span residues 61–88 (ADPW…HDHR) and 131–154 (SSPR…TPTS). Positions 135-145 (DPLHHHAMERD) are enriched in basic and acidic residues. The region spanning 149 to 223 (EDTPTSDDLE…LLQKWLEEAD (75 aa)) is the POU-specific domain. The homeobox DNA-binding region spans 241-300 (KRKKRTSIEVSVKGALEQHFHKQPKPSAQEITSLADSLQLEKEVVRVWFCNRRQKEKRMT). The tract at residues 314–351 (GHAHYGHGDVHGSPLQHSPPGLSPQHGLPQGAHTLAAH) is disordered.

Belongs to the POU transcription factor family. Class-3 subfamily. Restricted to the middle silk gland.

Its subcellular location is the nucleus. Its function is as follows. Involved in the transcriptional regulation of sericin-1 gene. The chain is Silk gland factor 3 (SGF3) from Bombyx mori (Silk moth).